The primary structure comprises 623 residues: Leucine-rich repeat, immunoglobulin-like domain and transmembrane domain-containing protein 1 (623 aa).

A signal peptide spans 1-21 (MRVALGMLWLLALAWPPQARG). Positions 22 to 59 (FCPSQCSCSLHIMGDGSKARTVVCNDPDMTLPPASIPP) constitute an LRRNT domain. Residues 22 to 526 (FCPSQCSCSL…EVVDAENTQQ (505 aa)) are Lumenal-facing. LRR repeat units follow at residues 60 to 81 (DTSRLRLERTAIRRVPGEAFRP), 84 to 105 (RLEQLWLPYNALSELNALMLRG), 108 to 129 (RLRELRLPGNRLAAFPWAALRD), 132 to 153 (KLRLLDLQANRLSAVPAEAARF), and 156 to 177 (NLTFLDLSSNQLMRLPQELIVS). Asparagine 156 carries N-linked (GlcNAc...) asparagine glycosylation. One can recognise an LRRCT domain in the interval 201–253 (NPWACDCRLYDLVHLLDGWAPNLAFIETELRCASPRSLAGVAFSQLELRKCQG). Residues 266–335 (LLGGTALLRC…YICQAKNFLG (70 aa)) enclose the Ig-like C2-type domain. Residues cysteine 275 and cysteine 328 are joined by a disulfide bond. N-linked (GlcNAc...) asparagine glycans are attached at residues asparagine 296 and asparagine 455. The region spanning 430-518 (MVRSVKVVGD…QCVIFSTNEV (89 aa)) is the Fibronectin type-III domain. The chain crosses the membrane as a helical span at residues 527–547 (LINVVVISVAIVIALPLTLLV). At 548–623 (CCSALQKRCR…GGRRINEYFC (76 aa)) the chain is on the cytoplasmic side. An LRR 6 repeat occupies 571–594 (YVNLERLGYSEDGLEELSRHSVSE).

In terms of assembly, may form a homodimer. Interacts with LRIT2; may form a heterodimer with LRIT2. Interacts (via its N-terminal extracellular domain) with metabotropic glutamate receptor GRM6. Interacts (via its extreme C-terminus) with the scaffold protein FRMPD2 (via the third PDZ domain); the interaction leads to their colocalization in photoreceptor synapses.

It is found in the endoplasmic reticulum membrane. It localises to the cell projection. Its subcellular location is the dendrite. Photoreceptor synaptic protein essential for normal vision. Involved in synapse formation in cone photoreceptor cells. The chain is Leucine-rich repeat, immunoglobulin-like domain and transmembrane domain-containing protein 1 (LRIT1) from Homo sapiens (Human).